The primary structure comprises 744 residues: Prestin (744 aa).

Residues 1–75 are Cytoplasmic-facing; that stretch reads MDHAEENEIP…PITKWLPAYK (75 aa). A helical membrane pass occupies residues 76–105; that stretch reads FKEYVLGDLVSGISTGVLQLPQGLAFAMLA. The Extracellular portion of the chain corresponds to 106-108; sequence AVP. The helical transmembrane segment at 109 to 126 threads the bilayer; sequence PVFGLYSSFYPVIMYCFF. Residues 127–137 are Cytoplasmic-facing; that stretch reads GTSRHISIGPF. A helical transmembrane segment spans residues 138–151; the sequence is AVISLMIGGVAVRL. Residues 152–168 lie on the Extracellular side of the membrane; sequence VPDDIVIPGGVNATNGT. Positions 158 to 168 match the Involved in motor function motif; the sequence is IPGGVNATNGT. N-linked (GlcNAc...) asparagine glycans are attached at residues N163 and N166. A helical membrane pass occupies residues 169–196; the sequence is EARDALRVKVAMSVTLLSGIIQFCLGVC. Over 197-206 the chain is Cytoplasmic; it reads RFGFVAIYLT. Residues 207–230 form a helical membrane-spanning segment; the sequence is EPLVRGFTTAAAVHVFTSMLKYLF. Topologically, residues 231–241 are extracellular; that stretch reads GVKTKRYSGIF. The helical intramembrane region spans 242–253; sequence SVVYSTVAVLQN. Residues 254-258 are Extracellular-facing; sequence VKNLN. A helical transmembrane segment spans residues 259–282; it reads VCSLGVGLMVFGLLLGGKEFNERF. Residues 283–291 lie on the Cytoplasmic side of the membrane; that stretch reads KEKLPAPIP. The chain crosses the membrane as a helical span at residues 292–307; it reads LEFFAVVMGTGISAGF. Topologically, residues 308 to 332 are extracellular; sequence NLHESYSVDVVGTLPLGLLPPANPD. A helical membrane pass occupies residues 333-367; sequence TSLFHLVYVDAIAIAIVGFSVTISMAKTLANKHGY. At 368–370 the chain is on the cytoplasmic side; it reads QVD. A helical membrane pass occupies residues 371-388; sequence GNQELIALGICNSIGSLF. Residues 389-396 are Extracellular-facing; that stretch reads QTFSISCS. A helical transmembrane segment spans residues 397-406; that stretch reads LSRSLVQEGT. Position 398 (S398) interacts with salicylate. Residues 407-410 lie on the Cytoplasmic side of the membrane; it reads GGKT. A helical transmembrane segment spans residues 411 to 432; sequence QLAGCLASLMILLVILATGFLF. Over 433 to 436 the chain is Extracellular; the sequence is ESLP. The chain crosses the membrane as a helical span at residues 437–464; it reads QAVLSAIVIVNLKGMFMQFSDLPFFWRT. A topological domain (cytoplasmic) is located at residue S465. A helical transmembrane segment spans residues 466–481; it reads KIELTIWLTTFVSSLF. Over 482 to 483 the chain is Extracellular; it reads LG. A helical membrane pass occupies residues 484–504; the sequence is LDYGLITAVIIALLTVIYRTQ. The interval 505 to 718 is extended region for STAS domain; it reads SPSYKVLGQL…AVLGSQVREA (214 aa). Residues 505-744 are Cytoplasmic-facing; it reads SPSYKVLGQL…PNATPTTPEA (240 aa). Residues 525-713 enclose the STAS domain; it reads AYEEVKEIPG…HSIHDAVLGS (189 aa). The tract at residues 720–744 is disordered; that stretch reads AEQEATASLPQEDMEPNATPTTPEA.

The protein belongs to the SLC26A/SulP transporter (TC 2.A.53) family. As to quaternary structure, homodimer. Interacts (via STAS domain) with CALM; this interaction is calcium-dependent and the STAS domain interacts with only one lobe of CALM which is an elongated conformation. Interacts with MYH1. In terms of tissue distribution, expressed in the outer hair cells (OHC) of the organ of Corti of the inner ear. Also weak expression in brain and testis. Very weakly expressed in heart, spleen, muscle and lactating mammary glands. Expressed in cardiac myocytes (at protein level), both in the surface sarcolemma and along the t-tubule. Weakly expressed in skeletal muscle cells (at protein level).

It is found in the lateral cell membrane. The catalysed reaction is 2 hydrogencarbonate(in) + chloride(out) = 2 hydrogencarbonate(out) + chloride(in). Its function is as follows. Voltage-sensitive motor protein that drives outer hair cell (OHC) electromotility (eM) and participates in sound amplification in the hearing organ. Converts changes in the transmembrane electric potential into mechanical displacements resulting in the coupling of its expansion to movement of a charged voltage sensor across the lipid membrane. The nature of the voltage sensor is not completely clear, and two models compete. In the first model, acts as an incomplete transporter where intracellular chloride anion acts as extrinsic voltage sensor that drives conformational change in the protein which is sufficient to produce a length change in the plane of the membrane and hence in the length of the OHC. The second model in which multiple charged amino acid residues are distributed at the intracellular and extracellular membrane interfaces that form an intrinsic voltage sensor, whose movement produces the non-linear capacitance (NLC). However, the effective voltage sensor may be the result of a hybrid voltage sensor, assembled from intrinsic charge (charged residues) and extrinsic charge (bound anion). Notably, binding of anions to the anion-binding pocket partially neutralizes the intrinsic positive charge rather than to form an electrically negative sensor, therefore remaining charge may serve as voltage sensor that, after depolarization, moves from down (expanded state) to up (contracted) conformation, which is accompanied by an eccentric contraction of the intermembrane cross-sectional area of the protein as well as a major increase in the hydrophobic thickness of the protein having as consequences the plasma membrane thickening and the cell contraction after membrane depolarization. The anion-binding pocket transits from the inward-open (Down) state, where it is exposed toward the intracellular solvent in the absence of anion, to the occluded (Up) state upon anion binding. Salicylate competes for the anion-binding site and inhibits the voltage-sensor movement, and therefore inhibits the charge transfer and electromotility by displacing Cl(-) from the anion-binding site and by preventing the structural transitions to the contracted state. In addition, can act as a weak Cl(-)/HCO3(-) antiporter across the cell membrane and so regulate the intracellular pH of the outer hair cells (OHCs), while firstly found as being unable to mediate electrogenic anion transport. Moreover, supports a role in cardiac mechanical amplification serving as an elastic element to enhance the actomyosin- based sarcomere contraction system. This is Prestin from Mus musculus (Mouse).